The sequence spans 475 residues: Tubulin epsilon chain (475 aa).

Position 148-154 (148-154) interacts with GTP; it reads GGGTGSG.

Belongs to the tubulin family. In terms of assembly, found in a complex with TEDC1, TEDC2, TUBE1 and TUBD1.

It is found in the cytoplasm. Its subcellular location is the cytoskeleton. It localises to the microtubule organizing center. The protein localises to the centrosome. This chain is Tubulin epsilon chain (TUBE1), found in Homo sapiens (Human).